The following is a 70-amino-acid chain: MLLHVGIPLSNNSLNTSTLGFDVVAYFSTILIPFLILFISIPFEISNFNKSISMLSEHRYSNISKSLIFL.

This is an uncharacterized protein from Vaccinia virus (strain Copenhagen) (VACV).